The chain runs to 146 residues: Transcriptional regulator MraZ (146 aa).

SpoVT-AbrB domains lie at 9–55 (TSAL…PRPV) and 81–124 (AMDV…DAQR).

It belongs to the MraZ family. Forms oligomers.

The protein resides in the cytoplasm. Its subcellular location is the nucleoid. This chain is Transcriptional regulator MraZ, found in Leptothrix cholodnii (strain ATCC 51168 / LMG 8142 / SP-6) (Leptothrix discophora (strain SP-6)).